The following is a 397-amino-acid chain: Pectate lyase 2 (397 aa).

An N-terminal signal peptide occupies residues 1–25 (MGIKQCCYILYFTLALVALLQPVRS). N-linked (GlcNAc...) asparagine glycosylation occurs at Asn37. Cys54 and Cys71 form a disulfide bridge. Asp194, Asp218, and Asp222 together coordinate Ca(2+). Arg274 is an active-site residue.

This sequence belongs to the polysaccharide lyase 1 family. Amb a subfamily. In terms of assembly, monomer. Requires Ca(2+) as cofactor. The N-terminus is blocked. Pollen and flowers.

The catalysed reaction is Eliminative cleavage of (1-&gt;4)-alpha-D-galacturonan to give oligosaccharides with 4-deoxy-alpha-D-galact-4-enuronosyl groups at their non-reducing ends.. The protein operates within glycan metabolism; pectin degradation; 2-dehydro-3-deoxy-D-gluconate from pectin: step 2/5. Functionally, has pectate lyase activity. This chain is Pectate lyase 2, found in Ambrosia artemisiifolia (Common ragweed).